Reading from the N-terminus, the 175-residue chain is Endoribonuclease YbeY (175 aa).

The Zn(2+) site is built by His-129, His-133, and His-139.

It belongs to the endoribonuclease YbeY family. The cofactor is Zn(2+).

Its subcellular location is the cytoplasm. Functionally, single strand-specific metallo-endoribonuclease involved in late-stage 70S ribosome quality control and in maturation of the 3' terminus of the 16S rRNA. The polypeptide is Endoribonuclease YbeY (Lactobacillus gasseri (strain ATCC 33323 / DSM 20243 / BCRC 14619 / CIP 102991 / JCM 1131 / KCTC 3163 / NCIMB 11718 / NCTC 13722 / AM63)).